The primary structure comprises 285 residues: Tyrosine recombinase XerA (285 aa).

One can recognise a Core-binding (CB) domain in the interval 7–84 (IVNSDILEEF…ALKSYFKFEG (78 aa)). The region spanning 100–274 (SLPKSLTEDE…TTKHLREAIE (175 aa)) is the Tyr recombinase domain. Catalysis depends on residues Arg-135, Lys-160, His-226, Arg-229, and His-252. Tyr-261 (O-(3'-phospho-DNA)-tyrosine intermediate) is an active-site residue.

It belongs to the 'phage' integrase family. XerA subfamily.

It is found in the cytoplasm. Its function is as follows. Site-specific tyrosine recombinase, which acts by catalyzing the cutting and rejoining of the recombining DNA molecules. This Pyrococcus horikoshii (strain ATCC 700860 / DSM 12428 / JCM 9974 / NBRC 100139 / OT-3) protein is Tyrosine recombinase XerA.